The primary structure comprises 150 residues: SsrA-binding protein (150 aa).

Positions 129–150 (ETEKQRDWQREKSRIMKGGSKE) are disordered.

This sequence belongs to the SmpB family.

It is found in the cytoplasm. Its function is as follows. Required for rescue of stalled ribosomes mediated by trans-translation. Binds to transfer-messenger RNA (tmRNA), required for stable association of tmRNA with ribosomes. tmRNA and SmpB together mimic tRNA shape, replacing the anticodon stem-loop with SmpB. tmRNA is encoded by the ssrA gene; the 2 termini fold to resemble tRNA(Ala) and it encodes a 'tag peptide', a short internal open reading frame. During trans-translation Ala-aminoacylated tmRNA acts like a tRNA, entering the A-site of stalled ribosomes, displacing the stalled mRNA. The ribosome then switches to translate the ORF on the tmRNA; the nascent peptide is terminated with the 'tag peptide' encoded by the tmRNA and targeted for degradation. The ribosome is freed to recommence translation, which seems to be the essential function of trans-translation. This is SsrA-binding protein from Cupriavidus pinatubonensis (strain JMP 134 / LMG 1197) (Cupriavidus necator (strain JMP 134)).